The sequence spans 543 residues: uncharacterized protein (543 aa).

Residues 1 to 59 (MLKKNDIVEVEIVDLTHEGAGVAKVDGLVFFVENALPSEKILMRVLKVNKKIGFGKVEK) enclose the TRAM domain. Residues Gln-283, Tyr-312, Glu-333, and Asp-381 each contribute to the S-adenosyl-L-methionine site. Cys-408 functions as the Nucleophile in the catalytic mechanism.

Belongs to the class I-like SAM-binding methyltransferase superfamily. RNA M5U methyltransferase family.

This is an uncharacterized protein from Streptococcus pneumoniae (strain ATCC BAA-255 / R6).